A 180-amino-acid polypeptide reads, in one-letter code: NADH-quinone oxidoreductase subunit I (180 aa).

4Fe-4S ferredoxin-type domains are found at residues 48–80 and 90–119; these read IVLT…LQKA and EFFR…LTPD. Positions 60, 63, 66, 70, 99, 102, 105, and 109 each coordinate [4Fe-4S] cluster.

It belongs to the complex I 23 kDa subunit family. In terms of assembly, NDH-1 is composed of 13 different subunits. Subunits NuoA, H, J, K, L, M, N constitute the membrane sector of the complex. The cofactor is [4Fe-4S] cluster.

The protein resides in the cell inner membrane. The enzyme catalyses a quinone + NADH + 5 H(+)(in) = a quinol + NAD(+) + 4 H(+)(out). Functionally, NDH-1 shuttles electrons from NADH, via FMN and iron-sulfur (Fe-S) centers, to quinones in the respiratory chain. The immediate electron acceptor for the enzyme in this species is believed to be ubiquinone. Couples the redox reaction to proton translocation (for every two electrons transferred, four hydrogen ions are translocated across the cytoplasmic membrane), and thus conserves the redox energy in a proton gradient. The sequence is that of NADH-quinone oxidoreductase subunit I from Edwardsiella ictaluri (strain 93-146).